Here is a 526-residue protein sequence, read N- to C-terminus: MKFDIEEFKERRKTDFEGAWHAGPSVITPPESSKIYPRYAYRRAKVHPIFDTIARLRAAYMSMGFDEAMVPVFIDEQDVYRQFGPEAAAVLDRVYYVGGLPRPNVGISRERLDAIAEIIEKPLAEGTEEKLMKCLHAYKKGKFDGDDLTHEMSVALGVDDGVVVHILDTVFPEFKELAPESSRTTLRSHMTSGWFISLAQMWDKKPMPIRMFSVDRCFRREQEEDATHLRTYHSASCIVAGEDVTVEEGKAVAEGLLSAFGFTEFRFQPDEKRSKYYMPETQTEVYGKHPVHGWVEVATFGIYSPAALAEYGVGVPVMNLGMGVERLAMVLTQAEDVRKLSFAQLYPPVYSDTDLTKGIGLREEPQTAEGRRAVRAVMETAAAHAAERSPCSFPAWKGELYGHQVEIVVEEPEENTSLLGPAALNEVYVRKGAVLGVPDTEKFADVKAEGVPVGISFLYSTANLALARIEEAARVGEGTSIQVKMSKHPSDVNLKIEEYVMRYITDNKKKLDLRGPVFMTITSKIL.

Substrate-binding positions include 189-191, 234-236, 276-277, and N319; these read HMT, SAS, and YY.

The protein belongs to the class-II aminoacyl-tRNA synthetase family. O-phosphoseryl-tRNA(Cys) synthetase subfamily. As to quaternary structure, homotetramer. Interacts with SepCysS.

The enzyme catalyses tRNA(Cys) + O-phospho-L-serine + ATP = O-phospho-L-seryl-tRNA(Cys) + AMP + diphosphate. In terms of biological role, catalyzes the attachment of O-phosphoserine (Sep) to tRNA(Cys). The sequence is that of O-phosphoserine--tRNA(Cys) ligase from Methanocorpusculum labreanum (strain ATCC 43576 / DSM 4855 / Z).